The following is a 193-amino-acid chain: uncharacterized protein (193 aa).

Residue Arg-8 coordinates substrate. His-9 functions as the Tele-phosphohistidine intermediate in the catalytic mechanism. The substrate site is built by Asn-15, Gln-21, and Arg-58. Glu-82 (proton donor/acceptor) is an active-site residue. His-139 lines the substrate pocket.

It belongs to the phosphoglycerate mutase family. GpmB subfamily.

Its function is as follows. Phosphatase with broad substrate specificity. Does not have phosphoglycerate mutase activity. This is an uncharacterized protein from Bacillus subtilis (strain 168).